The chain runs to 332 residues: PRKC apoptosis WT1 regulator protein (332 aa).

2 stretches are compositionally biased toward polar residues: residues 1-14 and 52-62; these read MATG…STTD and AQTTAAGTSEL. Residues 1–253 form a disordered region; the sequence is MATGGYRSSG…HNRDTSAPAN (253 aa). Positions 61-65 match the B30.2/SPRY domain-binding motif motif; sequence ELNHG. Residues 65-79 show a composition bias toward low complexity; sequence GPAGAAAPAAPGPGA. Residues 137 to 153 carry the Nuclear localization signal motif; the sequence is RKGKGQIEKRKLREKRR. The tract at residues 137–195 is selective for apoptosis induction in cancer cells (SAC); that stretch reads RKGKGQIEKRKLREKRRSTGVVNIPAAECLDEYEDDEAGQKERKREDAITQQNTIQNEA. T155 carries the post-translational modification Phosphothreonine; by PKA. The segment covering 174–184 has biased composition (basic and acidic residues); it reads AGQKERKREDA. A coiled-coil region spans residues 176-198; that stretch reads QKERKREDAITQQNTIQNEAASL. Polar residues predominate over residues 185 to 195; that stretch reads ITQQNTIQNEA. Position 223 is a phosphoserine (S223). Residues 234 to 247 show a composition bias toward basic and acidic residues; sequence PRTDRSGFSRHNRD. Residues 292-332 form a leucine-zipper region; that stretch reads IGKLKEEIDLLNRDLDDMEDENEQLKQENKTLLKVVGQLTR.

In terms of assembly, homooligomer. Interacts (via the C-terminal region) with WT1. Interacts with THAP1. Interacts with AATF. Interacts with BACE1. Interacts with SPSB1 (via B30.2/SPRY domain); this interaction is direct and occurs in association with the Elongin BC complex. Interacts with SPSB2 (via B30.2/SPRY domain); this interaction occurs in association with the Elongin BC complex. Interacts with SPSB4 (via B30.2/SPRY domain); this interaction occurs in association with the Elongin BC complex. Component of a ternary complex composed of SQSTM1 and PRKCZ. Interacts with actin. Post-translationally, preferentially phosphorylated at the Thr-155 by PKC in cancer cells.

The protein resides in the cytoplasm. It localises to the nucleus. Functionally, pro-apoptotic protein capable of selectively inducing apoptosis in cancer cells, sensitizing the cells to diverse apoptotic stimuli and causing regression of tumors in animal models. Induces apoptosis in certain cancer cells by activation of the Fas prodeath pathway and coparallel inhibition of NF-kappa-B transcriptional activity. Inhibits the transcriptional activation and augments the transcriptional repression mediated by WT1. Down-regulates the anti-apoptotic protein BCL2 via its interaction with WT1. Also seems to be a transcriptional repressor by itself. May be directly involved in regulating the amyloid precursor protein (APP) cleavage activity of BACE1. The protein is PRKC apoptosis WT1 regulator protein (Pawr) of Rattus norvegicus (Rat).